We begin with the raw amino-acid sequence, 503 residues long: Structure-specific endonuclease subunit EME2 (503 aa).

3 stretches are compositionally biased toward basic and acidic residues: residues 1–10 (METKQERETG), 38–48 (ETNKPQTESRK), and 112–135 (AEEKKRQRELKRQEKAQKKELEKI). Positions 1 to 135 (METKQERETG…KAQKKELEKI (135 aa)) are disordered. The tract at residues 70–366 (QPDVEEKTKN…RPFRKHWEAQ (297 aa)) is nuclease-like domain; forms the post-nick DNA binding interface and is involved in DNA recognition and bending. The stretch at 103–151 (EQVAAEQEQAEEKKRQRELKRQEKAQKKELEKIERERRKETNLALKLLR) forms a coiled coil. Residues 388 to 503 (GLPLTWRRQI…NPELVLDLNS (116 aa)) are helix-hairpin-helix (2HhH); forms the pre-nick DNA binding interface and is involved in DNA recognition and bending.

This sequence belongs to the EME1/MMS4 family. In terms of assembly, part of the heterodimeric MUS81-EME2 complex; the complex forms specifically during the DNA replication phase of the cell cycle.

The protein localises to the nucleus. In terms of biological role, non-catalytic subunit of the structure-specific, heterodimeric DNA endonuclease MUS81-EME2 which is involved in the maintenance of genome stability. In the complex, EME2 is required for DNA cleavage, participating in DNA recognition and bending. MUS81-EME2 cleaves 3'-flaps and nicked Holliday junctions, and exhibit limited endonuclease activity with 5' flaps and nicked double-stranded DNAs. MUS81-EME2 which is active during the replication of DNA is more specifically involved in replication fork processing. Replication forks frequently encounter obstacles to their passage, including DNA base lesions, DNA interstrand cross-links, difficult-to-replicate sequences, transcription bubbles, or tightly bound proteins. One mechanism for the restart of a stalled replication fork involves nucleolytic cleavage mediated by the MUS81-EME2 endonuclease. By acting upon the stalled fork, MUS81-EME2 generates a DNA double-strand break (DSB) that can be repaired by homologous recombination, leading to the restoration of an active fork. MUS81-EME2 could also function in telomere maintenance. The protein is Structure-specific endonuclease subunit EME2 (eme2) of Xenopus tropicalis (Western clawed frog).